Consider the following 294-residue polypeptide: Non-selective voltage-gated ion channel VDAC2 (294 aa).

Residue A2 is modified to N-acetylalanine. ATP-binding residues include K23 and K31. K31 is subject to N6-acetyllysine; alternate. K31 carries the post-translational modification N6-succinyllysine; alternate. Residue K31 forms a Glycyl lysine isopeptide (Lys-Gly) (interchain with G-Cter in ubiquitin); alternate linkage. 2 consecutive transmembrane segments (beta stranded) span residues 37–46 (LVKLDVKTKS) and 50–58 (VEFSTSGSS). K64 is covalently cross-linked (Glycyl lysine isopeptide (Lys-Gly) (interchain with G-Cter in ubiquitin)). Residues 65 to 75 (VTGTLETKYKW) traverse the membrane as a beta stranded segment. Y78 is modified (phosphotyrosine). 3 consecutive transmembrane segments (beta stranded) span residues 80–87 (LTFTEKWN), 91–100 (TLGTEIAIED), and 106–115 (LKLTFDTTFS). Phosphothreonine is present on T118. Position 120 is an N6-acetyllysine; alternate (K120). Residue K120 forms a Glycyl lysine isopeptide (Lys-Gly) (interchain with G-Cter in ubiquitin); alternate linkage. K121 participates in a covalent cross-link: Glycyl lysine isopeptide (Lys-Gly) (interchain with G-Cter in ubiquitin). The next 4 membrane-spanning stretches (beta stranded) occupy residues 122-131 (SGKIKSSYKR), 134-141 (VNLGCDVD), 148-156 (AIHGSAVFG), and 161-169 (LAGYQMTFD). A Glycyl lysine isopeptide (Lys-Gly) (interchain with G-Cter in ubiquitin) cross-link involves residue K172. Beta stranded transmembrane passes span 174–186 (KLTR…GYRT), 189–196 (FQLHTNVN), 200–209 (EFGGSIYQKV), 213–222 (LDTSVNLAWT), 229–238 (RFGIAAKYQL), and 242–249 (ASISAKVN). S251 is subject to Phosphoserine. NAD(+) is bound by residues 253–255 (LIG) and 271–275 (SALVD). The next 2 membrane-spanning stretches (beta stranded) occupy residues 253-262 (LIGVGYTQTL) and 265-274 (GVKLTLSALV). An N6-acetyllysine; alternate modification is found at K277. K277 is covalently cross-linked (Glycyl lysine isopeptide (Lys-Gly) (interchain with G-Cter in ubiquitin); alternate). Residues 284 to 293 (HKLGLALELE) form a beta stranded membrane-spanning segment.

It belongs to the eukaryotic mitochondrial porin family. As to quaternary structure, monomer, homodimer and higher order oligomers; formation of higher order structures is necessary for scramblase activity. Interacts with ARMC12 in a TBC1D21-dependent manner. Interacts with KLC3. Interacts with SPATA33. Interacts with PPP3CC in a SPATA33-dependent manner. Ubiquitinated by PRKN during mitophagy, leading to its degradation and enhancement of mitophagy. Deubiquitinated by USP30.

It localises to the mitochondrion outer membrane. The protein resides in the membrane. It catalyses the reaction chloride(in) = chloride(out). The enzyme catalyses K(+)(in) = K(+)(out). It carries out the reaction a 1,2-diacyl-sn-glycero-3-phospho-L-serine(in) = a 1,2-diacyl-sn-glycero-3-phospho-L-serine(out). The catalysed reaction is a 1,2-diacyl-sn-glycero-3-phosphocholine(in) = a 1,2-diacyl-sn-glycero-3-phosphocholine(out). It catalyses the reaction a 1,2-diacyl-sn-glycero-3-phospho-(1D-myo-inositol)(in) = a 1,2-diacyl-sn-glycero-3-phospho-(1D-myo-inositol)(out). In terms of biological role, non-selective voltage-gated ion channel that mediates the transport of anions and cations through the mitochondrion outer membrane and plasma membrane. The channel adopts an open conformation at zero mV and a closed conformation at both positive and negative potentials. There are two populations of channels; the main that functions in a lower open-state conductance with lower ion selectivity, that switch, in a voltage-dependent manner, from the open to a low-conducting 'closed' state and the other that has a normal ion selectivity in the typical high conductance, 'open' state. Binds various lipids, including the sphingolipid ceramide, the phospholipid phosphatidylcholine, and the sterols cholesterol and oxysterol. Binding of ceramide promotes the mitochondrial outer membrane permeabilization (MOMP) apoptotic pathway. Its function is as follows. Catalyzes the scrambling of phospholipids across the outer mitochondrial membrane; the mechanism is unrelated to channel activity and is capable of translocating both anionic and zwitterionic phospholipids. The polypeptide is Non-selective voltage-gated ion channel VDAC2 (Sus scrofa (Pig)).